Reading from the N-terminus, the 507-residue chain is Maturase K (507 aa).

This sequence belongs to the intron maturase 2 family. MatK subfamily.

It is found in the plastid. Its subcellular location is the chloroplast. In terms of biological role, usually encoded in the trnK tRNA gene intron. Probably assists in splicing its own and other chloroplast group II introns. This is Maturase K from Cryptomeria japonica (Japanese cedar).